The sequence spans 1354 residues: Ubiquitin carboxyl-terminal hydrolase 47 (1354 aa).

The span at 114–133 shows a compositional bias: polar residues; it reads EQPQLASDESGTADSSGLDD. The tract at residues 114-139 is disordered; it reads EQPQLASDESGTADSSGLDDSTQEKF. The 376-residue stretch at 174–549 folds into the USP domain; that stretch reads VGLVNQAMTC…NAYMLMYRLK (376 aa). Residue cysteine 183 is the Nucleophile of the active site. The interval 408 to 438 is disordered; sequence DVEDEKSPQTDSCTDSGAENEGSCHSDQMSN. Over residues 416–438 the composition is skewed to polar residues; the sequence is QTDSCTDSGAENEGSCHSDQMSN. The active-site Proton acceptor is the histidine 488. Polar residues predominate over residues 863 to 882; the sequence is LSLQQHQDGGNGDSSKSTEG. 2 disordered regions span residues 863–1004 and 1314–1335; these read LSLQ…ESGK and LAKK…SPRK. Positions 920–930 are enriched in basic and acidic residues; the sequence is PEERSDSDVNN. Positions 933–949 are enriched in low complexity; sequence STSSVDSDILSSSHSSD. Residues 977–986 show a composition bias toward basic and acidic residues; the sequence is KANDGKKETW. Residues 987-1000 show a composition bias toward acidic residues; that stretch reads DTAEEDSGTDSEYD.

Belongs to the peptidase C19 family. USP47 subfamily.

It localises to the cytoplasm. It carries out the reaction Thiol-dependent hydrolysis of ester, thioester, amide, peptide and isopeptide bonds formed by the C-terminal Gly of ubiquitin (a 76-residue protein attached to proteins as an intracellular targeting signal).. Ubiquitin-specific protease that specifically deubiquitinates monoubiquitinated DNA polymerase beta (polb), stabilizing polb thereby playing a role in base-excision repair (BER). The protein is Ubiquitin carboxyl-terminal hydrolase 47 (usp47) of Xenopus tropicalis (Western clawed frog).